An 822-amino-acid polypeptide reads, in one-letter code: von Willebrand factor A domain-containing protein 5A (822 aa).

Residues 1–131 (MEHHWGLITG…KVAVTLRYVQ (131 aa)) enclose the VIT domain. One can recognise a VWFA domain in the interval 281–469 (EFVFLMDRSG…LALQCALDDI (189 aa)). Positions 657–682 (SMPSPAPIENQGVADSSNEKSNSQNE) are disordered. The span at 669–680 (VADSSNEKSNSQ) shows a compositional bias: polar residues.

Functionally, may play a role in tumorigenesis as a tumor suppressor. Altered expression of this protein and disruption of the molecular pathway it is involved in may contribute directly to or modify tumorigenesis. The chain is von Willebrand factor A domain-containing protein 5A (Vwa5a) from Rattus norvegicus (Rat).